The sequence spans 562 residues: Probable sesquiterpene synthase (562 aa).

Mg(2+) is bound by residues Asp-315, Asp-319, and Glu-467. The short motif at 315-319 is the DDXXD motif element; the sequence is DDIYD.

This sequence belongs to the terpene synthase family. Tpsa subfamily. Requires Mg(2+) as cofactor. Mn(2+) is required as a cofactor.

In terms of biological role, sesquiterpene synthase. The protein is Probable sesquiterpene synthase (SesquiTPS) of Santalum austrocaledonicum (Sandalwood).